Consider the following 292-residue polypeptide: Ornithine decarboxylase antizyme (292 aa).

It belongs to the ODC antizyme family. Interacts with ODC/SPE1 and thereby sterically blocks ODC homodimerization.

Ornithine decarboxylase (ODC) antizyme protein that negatively regulates ODC activity and intracellular polyamine biosynthesis in response to increased intracellular polyamine levels. Binds to ODC/SPE1 monomers, inhibiting the assembly of the functional ODC homodimer, and targets the monomers for ubiquitin-independent proteolytic destruction by the 26S proteasome. The sequence is that of Ornithine decarboxylase antizyme (OAZ1) from Saccharomyces cerevisiae (strain ATCC 204508 / S288c) (Baker's yeast).